Reading from the N-terminus, the 311-residue chain is Putative methylthioribose-1-phosphate isomerase (311 aa).

Substrate contacts are provided by residues 46-48 (RGA), Arg-80, and Gln-174. Residue Asp-215 is the Proton donor of the active site. A substrate-binding site is contributed by 224-225 (NK).

This sequence belongs to the eIF-2B alpha/beta/delta subunits family. MtnA subfamily.

The catalysed reaction is 5-(methylsulfanyl)-alpha-D-ribose 1-phosphate = 5-(methylsulfanyl)-D-ribulose 1-phosphate. In terms of biological role, catalyzes the interconversion of methylthioribose-1-phosphate (MTR-1-P) into methylthioribulose-1-phosphate (MTRu-1-P). The chain is Putative methylthioribose-1-phosphate isomerase from Methanothermobacter thermautotrophicus (strain ATCC 29096 / DSM 1053 / JCM 10044 / NBRC 100330 / Delta H) (Methanobacterium thermoautotrophicum).